The primary structure comprises 221 residues: MLSVIFHTMLQKIKSLILFRGESVDREVGKIFPPGHFYSPIPNIKEVRRREEKIFRVRTDNEVLGIDLNKEEQLKHLEIIGSYVDLFDYPETPEHNLKCIYYKNNGVFEKLDALAYFAFIIHYRPNRIVEIGSGFSSLIAMDVNKKFYNDKIEIALIEPYPSDYLRRGILFYRNAELIDQPVQDVDLSFFETLEENVISRNNFTPQSTTSRTQTPFQQAAS.

This is an uncharacterized protein from Archaeoglobus fulgidus (strain ATCC 49558 / DSM 4304 / JCM 9628 / NBRC 100126 / VC-16).